Reading from the N-terminus, the 385-residue chain is 4-hydroxy-3-methylbut-2-en-1-yl diphosphate synthase (flavodoxin) (385 aa).

Positions 280, 283, 315, and 322 each coordinate [4Fe-4S] cluster.

This sequence belongs to the IspG family. The cofactor is [4Fe-4S] cluster.

It carries out the reaction (2E)-4-hydroxy-3-methylbut-2-enyl diphosphate + oxidized [flavodoxin] + H2O + 2 H(+) = 2-C-methyl-D-erythritol 2,4-cyclic diphosphate + reduced [flavodoxin]. The protein operates within isoprenoid biosynthesis; isopentenyl diphosphate biosynthesis via DXP pathway; isopentenyl diphosphate from 1-deoxy-D-xylulose 5-phosphate: step 5/6. In terms of biological role, converts 2C-methyl-D-erythritol 2,4-cyclodiphosphate (ME-2,4cPP) into 1-hydroxy-2-methyl-2-(E)-butenyl 4-diphosphate. The polypeptide is 4-hydroxy-3-methylbut-2-en-1-yl diphosphate synthase (flavodoxin) (Streptomyces griseus subsp. griseus (strain JCM 4626 / CBS 651.72 / NBRC 13350 / KCC S-0626 / ISP 5235)).